Consider the following 701-residue polypeptide: Polyribonucleotide nucleotidyltransferase (701 aa).

Residues Asp-489 and Asp-495 each contribute to the Mg(2+) site. The 60-residue stretch at 556 to 615 folds into the KH domain; the sequence is PRIHTMKIHPDKIREVIGSGGKVIRSITEETGCAIDIEDDGTIRIASSDQASAEQAVKII. The 69-residue stretch at 625-693 folds into the S1 motif domain; it reads GQVYEGKVVR…RQGRVKLTMK (69 aa).

It belongs to the polyribonucleotide nucleotidyltransferase family. Mg(2+) serves as cofactor.

Its subcellular location is the cytoplasm. It carries out the reaction RNA(n+1) + phosphate = RNA(n) + a ribonucleoside 5'-diphosphate. Involved in mRNA degradation. Catalyzes the phosphorolysis of single-stranded polyribonucleotides processively in the 3'- to 5'-direction. The protein is Polyribonucleotide nucleotidyltransferase of Magnetococcus marinus (strain ATCC BAA-1437 / JCM 17883 / MC-1).